The following is a 322-amino-acid chain: Labrum-interacting protein from saliva LIPS-2 (322 aa).

An N-terminal signal peptide occupies residues 1–20 (MKTSLPIVVLLTAVISGVHP). A disulfide bridge connects residues Cys27 and Cys62. 2 N-linked (GlcNAc...) asparagine glycosylation sites follow: Asn168 and Asn175. A disulfide bond links Cys249 and Cys295.

As to quaternary structure, monomer in solution. Interacts (via the N-terminal domain) with cuticular protein Cp19 (via the C-terminus). Proteolytically cleaved by human mast cell tryptase and chymase. In terms of processing, glycosylated. In terms of tissue distribution, female salivary gland (at protein level). Female saliva (at protein level).

The protein resides in the secreted. Salivary protein that promotes mosquito blood feeding on the vertebrate host by inducing morphological changes in the mosquito labrum. Interacts with the mosquito labrum end tip and triggers salivation and probing. Modulates enzymatic activities of human tryptase and chymase. In Aedes albopictus (Asian tiger mosquito), this protein is Labrum-interacting protein from saliva LIPS-2.